Consider the following 422-residue polypeptide: Carboxypeptidase B2 (422 aa).

Residues 1–21 (MKLHGLGILVAIILYEQHGFA) form the signal peptide. Positions 22–113 (FQSGQVLSAL…QTFNDTVSPR (92 aa)) are cleaved as a propeptide — activation peptide. Asn-43, Asn-72, Asn-84, and Asn-107 each carry an N-linked (GlcNAc...) asparagine glycan. The 298-residue stretch at 121–418 (QYHSLNEIYS…AAISKIVWHV (298 aa)) folds into the Peptidase M14 domain. Residues Cys-177 and Cys-190 are joined by a disulfide bond. Residues His-180 and Glu-183 each contribute to the Zn(2+) site. Substrate is bound by residues 180–183 (HARE) and Arg-238. The N-linked (GlcNAc...) asparagine glycan is linked to Asn-240. 2 cysteine pairs are disulfide-bonded: Cys-249–Cys-273 and Cys-264–Cys-278. 255–256 (NR) contributes to the substrate binding site. His-309 contacts Zn(2+). 310 to 311 (SY) provides a ligand contact to substrate. The N-linked (GlcNAc...) asparagine glycan is linked to Asn-322. Tyr-362 is a substrate binding site. Catalysis depends on Glu-384, which acts as the Proton donor/acceptor.

Belongs to the peptidase M14 family. The cofactor is Zn(2+). In terms of tissue distribution, plasma; synthesized in the liver.

It localises to the secreted. It catalyses the reaction Release of C-terminal Arg and Lys from a polypeptide.. With respect to regulation, TAFI/CPB2 is unique among carboxypeptidases in that it spontaneously inactivates with a short half-life, a property that is crucial for its role in controlling blood clot lysis. The zymogen is stabilized by interactions with the activation peptide. Release of the activation peptide increases a dynamic flap mobility and in time this leads to conformational changes that disrupt the catalytic site and expose a cryptic thrombin-cleavage site present at Arg-323. In terms of biological role, cleaves C-terminal arginine or lysine residues from biologically active peptides such as kinins or anaphylatoxins in the circulation thereby regulating their activities. Down-regulates fibrinolysis by removing C-terminal lysine residues from fibrin that has already been partially degraded by plasmin. The chain is Carboxypeptidase B2 (Cpb2) from Mus musculus (Mouse).